A 405-amino-acid chain; its full sequence is Prenyltransferase phqA (405 aa).

Dimethylallyl diphosphate is bound by residues Y195, K262, and Q332.

Belongs to the tryptophan dimethylallyltransferase family.

It functions in the pathway alkaloid biosynthesis. Its function is as follows. Prenyltransferase; part of the gene cluster that mediates the biosynthesis of paraherquamide, a fungal indole alkaloid that belongs to a family of natural products containing a characteristic bicyclo[2.2.2]diazaoctane core. The first steps in the biosynthesis of paraherquamide is the production of the beta-methyl-proline precursor from L-isoleucine. They require oxidation of a terminally hydroxylated L-isoleucine to the corresponding aldehyde by enzymes which have still to be identified. Spontaneous cyclization and dehydration would yield the 4-methyl pyrolline-5-carboxylic acid, which is then reduced by the pyrroline-5-carboxylate reductase phqD leading to the beta-methyl-proline precursor. The next step of paraherquamide biosynthesis involves coupling of beta-methyl-proline and L-tryptophan by the bimodular NRPS phqB, to produce a monooxopiperazine intermediate. The reductase (R) domain of phqB utilizes NADPH for hydride transfer to reduce the thioester bond of the T domain-tethered linear dipeptide to a hemithioaminal intermediate, which spontaneously cleaves the C-S bond to release the aldehyde product. This compound undergoes spontaneous cyclization and dehydration to give a dienamine which is reverse prenylated at C-2 by the reverse prenyltransferase phqJ. The other prenyltransferase present in the cluster, phqI may be a redundant gene in the pathway. During biosynthetic assembly, the key step to produce the polycyclic core is catalyzed by the bifunctional reductase and intramolecular [4+2] Diels-Alderase, phqE, resulting in formation of the [2.2.2] diazaoctane intermediate preparaherquamide. Following formation of preparaherquamide, an indole 2,3-epoxidation-initiated pinacol-like rearrangement is catalyzed by the phqK FAD-dependent monooxygenase. The prenyltransferase phqA, the cytochrome P450 monooxygenase phqL, and the FAD-linked oxidoreductase phqH (or the cytochrome P450 monooxygenase phqM), are proposed to be involved in the formation of the pyran ring. The FAD-dependent monooxygenase phqK is likely responsible for generation of the spiro-oxindole, and the N-methylation is likely mediated by the phqN methyltransferase leading to the isolable natural product paraherquamide F. However, the order of these biosynthetic steps has still to be determined. In late-stage paraherquamide biosynthesis, the third P450 monooxygenase, phqO, is probably responsible for the C-14 hydroxylation, transforming paraherquamide F to paraherquamide G, and paraherquamide E to the final product paraherquamide A. The expansion from the 6-membered ring pyran (in paraherquamides F and G) to the 7-membered dioxepin ring (in paraherquamides A and E) represents a poorly understood but intriguing process that probably involves the 2-oxoglutarate-dependent dioxygenase phqC. Finally, the remaining members of the paraherquamide cluster, including phqI as well as phqM (or phqH), do not have a clearly prescribed role and appear to be redundant. This chain is Prenyltransferase phqA, found in Penicillium fellutanum.